A 197-amino-acid chain; its full sequence is Small ribosomal subunit protein uS4c (197 aa).

In terms of domain architecture, S4 RNA-binding spans 85 to 161; it reads MRLDNILFRL…TGKELANHLN (77 aa).

This sequence belongs to the universal ribosomal protein uS4 family. As to quaternary structure, part of the 30S ribosomal subunit. Contacts protein S5. The interaction surface between S4 and S5 is involved in control of translational fidelity.

The protein resides in the plastid. One of the primary rRNA binding proteins, it binds directly to 16S rRNA where it nucleates assembly of the body of the 30S subunit. Functionally, with S5 and S12 plays an important role in translational accuracy. The chain is Small ribosomal subunit protein uS4c (rps4) from Cuscuta sandwichiana (Kauna'oa).